Consider the following 430-residue polypeptide: Putative chloroquine resistance transporter (430 aa).

Residues Met-1 to Asp-22 form a disordered region. Residues Met-1–Ser-53 are Cytoplasmic-facing. Residues Ser-7–Ser-21 show a composition bias toward low complexity. Residues Lys-54–Phe-74 traverse the membrane as a helical segment. Residues Lys-75–Thr-88 lie on the Vacuolar side of the membrane. The helical transmembrane segment at Ile-89–Leu-109 threads the bilayer. The Cytoplasmic segment spans residues Phe-110–Arg-122. A helical membrane pass occupies residues Pro-123 to Ala-143. Residues His-144–Gly-147 are Vacuolar-facing. A helical membrane pass occupies residues Leu-148 to Ile-168. Topologically, residues Leu-169–Tyr-173 are cytoplasmic. A helical transmembrane segment spans residues His-174–Leu-194. An N-linked (GlcNAc...) asparagine glycan is attached at Asn-195. Residues Asn-195–Asn-206 lie on the Vacuolar side of the membrane. The helical transmembrane segment at Asn-207–Leu-223 threads the bilayer. Over Arg-224 to Gln-239 the chain is Cytoplasmic. Residues Phe-240–Pro-260 form a helical membrane-spanning segment. Topologically, residues Phe-261–Glu-306 are vacuolar. 2 disulfide bridges follow: Cys-281/Cys-304 and Cys-293/Cys-301. The chain crosses the membrane as a helical span at residues Ala-307–Met-329. Topologically, residues Leu-330–Thr-335 are cytoplasmic. A helical membrane pass occupies residues Phe-336 to Ala-358. Residues Gly-359–Ser-364 are Vacuolar-facing. The helical transmembrane segment at Phe-365–Leu-385 threads the bilayer. The Cytoplasmic segment spans residues Gly-386 to Thr-430.

It belongs to the CRT-like transporter family.

Its subcellular location is the vacuole membrane. In terms of biological role, nutrient transporter. Involved in maintaining the osmotic homeostasis of the digestive vacuole. The sequence is that of Putative chloroquine resistance transporter from Theileria annulata.